The chain runs to 312 residues: Ribosomal protein L11 methyltransferase (312 aa).

4 residues coordinate S-adenosyl-L-methionine: threonine 163, glycine 184, aspartate 206, and asparagine 248.

This sequence belongs to the methyltransferase superfamily. PrmA family.

The protein localises to the cytoplasm. It catalyses the reaction L-lysyl-[protein] + 3 S-adenosyl-L-methionine = N(6),N(6),N(6)-trimethyl-L-lysyl-[protein] + 3 S-adenosyl-L-homocysteine + 3 H(+). Methylates ribosomal protein L11. The polypeptide is Ribosomal protein L11 methyltransferase (Clostridium botulinum (strain Okra / Type B1)).